The primary structure comprises 580 residues: Proline--tRNA ligase (580 aa).

The protein belongs to the class-II aminoacyl-tRNA synthetase family. ProS type 1 subfamily. Homodimer.

The protein localises to the cytoplasm. It carries out the reaction tRNA(Pro) + L-proline + ATP = L-prolyl-tRNA(Pro) + AMP + diphosphate. Catalyzes the attachment of proline to tRNA(Pro) in a two-step reaction: proline is first activated by ATP to form Pro-AMP and then transferred to the acceptor end of tRNA(Pro). As ProRS can inadvertently accommodate and process non-cognate amino acids such as alanine and cysteine, to avoid such errors it has two additional distinct editing activities against alanine. One activity is designated as 'pretransfer' editing and involves the tRNA(Pro)-independent hydrolysis of activated Ala-AMP. The other activity is designated 'posttransfer' editing and involves deacylation of mischarged Ala-tRNA(Pro). The misacylated Cys-tRNA(Pro) is not edited by ProRS. In Maridesulfovibrio salexigens (strain ATCC 14822 / DSM 2638 / NCIMB 8403 / VKM B-1763) (Desulfovibrio salexigens), this protein is Proline--tRNA ligase.